The following is a 443-amino-acid chain: MGKLLQLALHPDELASIVQFKLFRKNENARNPATESAELIRCYELLNLTSRSFAAVIEELHPELRNVIMVFYLVLRALDTVEVDMSIENSVKLPVLRQFHEKLDTKDWTFDGNSPNEKDRCVLVEFDRILGQYHELKPQYQKVIKEITEKMGNGMADYIENENFNSNGLLTIEDYDLYCYYVAGLVGDGLTQLIVLAKFGNSELSVNKQLFKSMGLFLQKTNIIRDYEEDQVDGRAFWPKEIWGKYANELSDFMKPENQSQGLWCISELVCNALDHVIDVLQYLALVEEQTSFNFCAIPQVMAIATLELVFQNPQVLTQHVKIRKGTTVSLILESRTLEGCARIFRRYLRKIHHKSHPSDPNYLRLGITIGKIEQFLDGMYPHYVPKGITPQTTSIRTQVVKRLQLDEPMKRDIDEEILKTRILLLSLGVAVFGVVYGVVRII.

2 helical membrane passes run 291–311 (TSFN…ELVF) and 423–443 (ILLL…VRII).

Belongs to the phytoene/squalene synthase family. Mg(2+) is required as a cofactor.

Its subcellular location is the endoplasmic reticulum membrane. The catalysed reaction is 2 (2E,6E)-farnesyl diphosphate + NADPH + H(+) = squalene + 2 diphosphate + NADP(+). It catalyses the reaction 2 (2E,6E)-farnesyl diphosphate + NADH + H(+) = squalene + 2 diphosphate + NAD(+). It participates in terpene metabolism; lanosterol biosynthesis; lanosterol from farnesyl diphosphate: step 1/3. Functionally, catalyzes the condensation of 2 two farnesyl pyrophosphate moieties to form squalene. It is the first committed enzyme of the sterol biosynthesis pathway. Required for the biosynthesis of ergosterol. The protein is Squalene synthase (ERG9) of Cyberlindnera jadinii (Torula yeast).